The sequence spans 169 residues: Putative phosphoesterase SE_0715 (169 aa).

The active-site Proton donor is His-34. 2 short sequence motifs (HXTX) span residues 34-37 (HITI) and 115-118 (HFTI). His-115 serves as the catalytic Proton acceptor.

This sequence belongs to the 2H phosphoesterase superfamily. YjcG family.

The protein is Putative phosphoesterase SE_0715 of Staphylococcus epidermidis (strain ATCC 12228 / FDA PCI 1200).